The primary structure comprises 302 residues: Zinc finger protein-like 1 homolog (302 aa).

The segment at 1–43 (MGLCKCPKRLVTNQFCFEHRVNVCEHCMVQSHPKCIVQSYLQW) adopts a B box-type; degenerate zinc-finger fold. The RING-type; atypical zinc finger occupies 53 to 101 (CNLCGTSLEQGECVRLVCYHVFHWDCLNARQAALPANTAPRGHQCPGCS). The disordered stretch occupies residues 168 to 233 (IHSGGERERG…RDDNKYQRRT (66 aa)). Residues 198–208 (PPSSGDFNASS) are compositionally biased toward polar residues. S217 is modified (phosphoserine). A helical transmembrane segment spans residues 258–278 (WFLVLSGILAFVMFIYLLAWM).

It belongs to the ZFPL1 family.

Its subcellular location is the membrane. This is Zinc finger protein-like 1 homolog from Drosophila pseudoobscura pseudoobscura (Fruit fly).